The chain runs to 434 residues: Glutamyl-tRNA reductase (434 aa).

Substrate is bound by residues 49-52 (TCNR), S109, 114-116 (EPQ), and Q120. C50 acts as the Nucleophile in catalysis. 189-194 (GAGEMC) is an NADP(+) binding site.

It belongs to the glutamyl-tRNA reductase family. As to quaternary structure, homodimer.

It carries out the reaction (S)-4-amino-5-oxopentanoate + tRNA(Glu) + NADP(+) = L-glutamyl-tRNA(Glu) + NADPH + H(+). The protein operates within porphyrin-containing compound metabolism; protoporphyrin-IX biosynthesis; 5-aminolevulinate from L-glutamyl-tRNA(Glu): step 1/2. Catalyzes the NADPH-dependent reduction of glutamyl-tRNA(Glu) to glutamate 1-semialdehyde (GSA). The sequence is that of Glutamyl-tRNA reductase from Geotalea uraniireducens (strain Rf4) (Geobacter uraniireducens).